We begin with the raw amino-acid sequence, 490 residues long: Sushi domain-containing protein 4 (490 aa).

Residues 1 to 20 form a disordered region; it reads MYHGMNPSNGDGFLEQQLQQ. A signal peptide spans 1-41; the sequence is MYHGMNPSNGDGFLEQQLQQQQPQSPQRLLAVILWFQLALC. The Extracellular segment spans residues 42 to 319; the sequence is FGPAQLTGGF…PSTHETLLTT (278 aa). 4 Sushi domains span residues 55–119, 120–179, 178–239, and 241–304; these read NVCA…VCIQ, EDCR…ICQG, QGCL…RCLA, and EVCP…YCIK. Disulfide bonds link Cys-57–Cys-99, Cys-85–Cys-117, Cys-122–Cys-165, Cys-147–Cys-177, Cys-180–Cys-224, Cys-210–Cys-237, Cys-243–Cys-289, and Cys-274–Cys-302. N-linked (GlcNAc...) asparagine glycosylation is found at Asn-104 and Asn-134. Residue Asn-192 is glycosylated (N-linked (GlcNAc...) asparagine). A helical transmembrane segment spans residues 320-340; sequence WKIVAFTATSVLLVLLLVILA. At 341 to 490 the chain is on the cytoplasmic side; it reads RMFQTKFKAH…DEIPLMEEDP (150 aa). Residues 394–490 form a disordered region; it reads YPASVGQGCP…DEIPLMEEDP (97 aa). Polar residues-rich tracts occupy residues 430 to 444 and 461 to 475; these read CDSTSGSSEMLQSLY and DTISSTAGEVASTSP. A compositionally biased stretch (acidic residues) spans 479–490; that stretch reads IADEIPLMEEDP.

In terms of tissue distribution, high expression in brain and eye, with weaker expression in spinal cord and testis. Detected in white matter of brain and in the outer segments of photoreceptors.

Its subcellular location is the membrane. Its function is as follows. Acts as a complement inhibitor by disrupting the formation of the classical C3 convertase. Isoform 3 inhibits the classical complement pathway, while membrane-bound isoform 1 inhibits deposition of C3b via both the classical and alternative complement pathways. The sequence is that of Sushi domain-containing protein 4 (Susd4) from Mus musculus (Mouse).